The sequence spans 297 residues: Mycothiol acetyltransferase (297 aa).

E35 contributes to the 1D-myo-inositol 2-(L-cysteinylamino)-2-deoxy-alpha-D-glucopyranoside binding site. 73-75 (MLV) lines the acetyl-CoA pocket. The N-acetyltransferase domain maps to 155 to 297 (LRTFGGTEAE…VAVHAQYGIP (143 aa)). 3 residues coordinate 1D-myo-inositol 2-(L-cysteinylamino)-2-deoxy-alpha-D-glucopyranoside: E181, K222, and E230. Residues 234-236 (LGV) and 241-247 (QGRGLGR) each bind acetyl-CoA. Position 268 (Y268) interacts with 1D-myo-inositol 2-(L-cysteinylamino)-2-deoxy-alpha-D-glucopyranoside.

Belongs to the acetyltransferase family. MshD subfamily. Monomer.

It catalyses the reaction 1D-myo-inositol 2-(L-cysteinylamino)-2-deoxy-alpha-D-glucopyranoside + acetyl-CoA = mycothiol + CoA + H(+). Functionally, catalyzes the transfer of acetyl from acetyl-CoA to desacetylmycothiol (Cys-GlcN-Ins) to form mycothiol. The polypeptide is Mycothiol acetyltransferase (Beutenbergia cavernae (strain ATCC BAA-8 / DSM 12333 / CCUG 43141 / JCM 11478 / NBRC 16432 / NCIMB 13614 / HKI 0122)).